The chain runs to 690 residues: eEF1A lysine and N-terminal methyltransferase (690 aa).

Residues 427–451 (AAASSASKKKNKKKAKQPASTGAKD) are disordered. Basic residues predominate over residues 433–442 (SKKKNKKKAK).

It belongs to the methyltransferase superfamily.

It catalyses the reaction L-lysyl-[protein] + S-adenosyl-L-methionine = N(6)-methyl-L-lysyl-[protein] + S-adenosyl-L-homocysteine + H(+). The catalysed reaction is N(6)-methyl-L-lysyl-[protein] + S-adenosyl-L-methionine = N(6),N(6)-dimethyl-L-lysyl-[protein] + S-adenosyl-L-homocysteine + H(+). It carries out the reaction N-terminal glycyl-L-lysyl-L-glutamyl-[protein] + 3 S-adenosyl-L-methionine = N-terminal N,N,N-trimethyl-glycyl-L-lysyl-L-glutamyl-[protein] + 3 S-adenosyl-L-homocysteine + 3 H(+). Its function is as follows. Dual methyltransferase that catalyzes methylation of elongation factor 1-alpha (eef1a1 and eef1a2) at two different positions, and is therefore involved in the regulation of mRNA translation. Via its C-terminus, methylates the N-terminus of eef1a1 and eef1a2. Via its N-terminus dimethylates lysine residues of eef1a1 and eef1a2. In Danio rerio (Zebrafish), this protein is eEF1A lysine and N-terminal methyltransferase (mettl13).